Here is an 88-residue protein sequence, read N- to C-terminus: UPF0250 protein swp_3927 (88 aa).

Belongs to the UPF0250 family.

This is UPF0250 protein swp_3927 from Shewanella piezotolerans (strain WP3 / JCM 13877).